Consider the following 129-residue polypeptide: Phosphoribosyl-AMP cyclohydrolase (129 aa).

D82 contacts Mg(2+). Zn(2+) is bound at residue C83. Mg(2+) is bound by residues D84 and D86. 2 residues coordinate Zn(2+): C99 and C106.

It belongs to the PRA-CH family. Homodimer. It depends on Mg(2+) as a cofactor. Zn(2+) serves as cofactor.

Its subcellular location is the cytoplasm. It catalyses the reaction 1-(5-phospho-beta-D-ribosyl)-5'-AMP + H2O = 1-(5-phospho-beta-D-ribosyl)-5-[(5-phospho-beta-D-ribosylamino)methylideneamino]imidazole-4-carboxamide. Its pathway is amino-acid biosynthesis; L-histidine biosynthesis; L-histidine from 5-phospho-alpha-D-ribose 1-diphosphate: step 3/9. In terms of biological role, catalyzes the hydrolysis of the adenine ring of phosphoribosyl-AMP. The chain is Phosphoribosyl-AMP cyclohydrolase from Methanosarcina barkeri (strain Fusaro / DSM 804).